Here is a 571-residue protein sequence, read N- to C-terminus: MRTSQYLFSTLKETPNDAQVISHQLMLRAGMIRPTAAGLYNWLPTGVKILKKVENIIREEMNKGGAIEILMPVVQPAELWQESSRWEQYGPELLRFADRGKRDFVLGPTHEEVITDLVRRELSSYKQLPLNLYQIQTKFRDEVRPRFGVMRSREFVMKDAYSFHTTPESLQQTYEVMYQVYHRIFTRLGLDFRTVQADTGSIGGSASHEFQVLASSGEDDIVFSTESDFAANIELAEAVAMGESKPATEAMVLIDTPNAKTIAELVAQFDLAIEKTVKTLIVKGANETAPLVALILRGDHELNEIKAQKHPLVAEPLAFADEDEIKAKIGVSVGYLGPVNLAIPAIVDRSVALMSDFVAGANIDGKHYLNINWQRDVVLPEVFDLRNVVVGDPSPDGRGILLIKRGIEVGHIFQLGQKYSAAMNATVQGEDGKPLVMTMGCYGIGVTRVVAAAIEQHHDERGIIWPTDEIAPFTVAIVPMNMFKSASVQAFAEQLYTDLMAQGVDVILDDRKERPGVMFADMELIGVPHMIVIGEKNLENGEVEYKNRRTGEKTMIAKDQLLAYLAQNVRA.

This sequence belongs to the class-II aminoacyl-tRNA synthetase family. ProS type 1 subfamily. In terms of assembly, homodimer.

The protein localises to the cytoplasm. It carries out the reaction tRNA(Pro) + L-proline + ATP = L-prolyl-tRNA(Pro) + AMP + diphosphate. In terms of biological role, catalyzes the attachment of proline to tRNA(Pro) in a two-step reaction: proline is first activated by ATP to form Pro-AMP and then transferred to the acceptor end of tRNA(Pro). As ProRS can inadvertently accommodate and process non-cognate amino acids such as alanine and cysteine, to avoid such errors it has two additional distinct editing activities against alanine. One activity is designated as 'pretransfer' editing and involves the tRNA(Pro)-independent hydrolysis of activated Ala-AMP. The other activity is designated 'posttransfer' editing and involves deacylation of mischarged Ala-tRNA(Pro). The misacylated Cys-tRNA(Pro) is not edited by ProRS. This is Proline--tRNA ligase from Haemophilus ducreyi (strain 35000HP / ATCC 700724).